The chain runs to 737 residues: Prospero homeobox protein 1 (737 aa).

The interval 1–28 (MPDHDSTALLSRQTKRRRVDIGVKRTVG) is interaction with RORG. Positions 103-135 (KNGGTEPSFQASGLSSTGSEVHQEDICSNSSRD) are enriched in polar residues. The interval 103–147 (KNGGTEPSFQASGLSSTGSEVHQEDICSNSSRDSPPECLSPFGRP) is disordered. Residues Ser177, Ser179, Ser199, Ser291, and Ser295 each carry the phosphoserine modification. Residues 178 to 221 (HSPSVALRGNENEREMAPQSVSPRESYRENKRKQKLPQQQQQSF) form a disordered region. Over residues 320 to 337 (MAENKPKREGSNKERDHG) the composition is skewed to basic and acidic residues. Disordered stretches follow at residues 320 to 344 (MAEN…LQPE) and 444 to 476 (RKNS…AGFT). Residue Lys324 forms a Glycyl lysine isopeptide (Lys-Gly) (interchain with G-Cter in SUMO2) linkage. Positions 464 to 476 (LHQSPLSATAGFT) are enriched in polar residues. Ser511 and Ser514 each carry phosphoserine. The tract at residues 525 to 547 (RTKMSSHHLSHHPCSPAHPPSTA) is disordered. Ser557 bears the Phosphoserine mark. Residues 577-635 (QEGLSPNHLKKAKLMFFYTRYPSSNMLKTYFSDVKFNRCITSQLIKWFSNFREFYYIQM) form the Prospero-type homeo domain. The tract at residues 577–735 (QEGLSPNHLK…KSPNCLQELL (159 aa)) is homeo-Prospero. A Prospero domain is found at 636–735 (EKYARQAIND…KSPNCLQELL (100 aa)). Positions 723-729 (EIFKSPN) are essential for nuclear localization, interaction with RORG, repression of RORG transcriptional activator activity.

The protein belongs to the Prospero homeodomain family. In terms of assembly, interacts with RORA and RORG (via AF-2 motif). In terms of tissue distribution, expressed in the young neurons of the subventricular region of the CNS, developing eye lens and pancreas. It is also found in the developing liver, heart and skeletal muscle. In the eye, expressed in the lens and retina at postnatal day 10. In the retina, localized to the inner nuclear layer. In the lens, localized to epithelial and fiber cells.

It is found in the nucleus. In terms of biological role, transcription factor involved in developmental processes such as cell fate determination, gene transcriptional regulation and progenitor cell regulation in a number of organs. Plays a critical role in embryonic development and functions as a key regulatory protein in neurogenesis and the development of the heart, eye lens, liver, pancreas and the lymphatic system. Involved in the regulation of the circadian rhythm. Represses: transcription of the retinoid-related orphan receptor RORG, transcriptional activator activity of RORA and RORG and the expression of RORA/G-target genes including core clock components: BMAL1, NPAS2 and CRY1 and metabolic genes: AVPR1A and ELOVL3. In Mus musculus (Mouse), this protein is Prospero homeobox protein 1 (Prox1).